The sequence spans 226 residues: uncharacterized protein (226 aa).

This is an uncharacterized protein from Haemophilus influenzae (strain ATCC 51907 / DSM 11121 / KW20 / Rd).